Here is a 122-residue protein sequence, read N- to C-terminus: Large ribosomal subunit protein uL14 (122 aa).

It belongs to the universal ribosomal protein uL14 family. Part of the 50S ribosomal subunit. Forms a cluster with proteins L3 and L19. In the 70S ribosome, L14 and L19 interact and together make contacts with the 16S rRNA in bridges B5 and B8.

In terms of biological role, binds to 23S rRNA. Forms part of two intersubunit bridges in the 70S ribosome. The chain is Large ribosomal subunit protein uL14 from Bifidobacterium adolescentis (strain ATCC 15703 / DSM 20083 / NCTC 11814 / E194a).